The sequence spans 311 residues: Malate dehydrogenase (311 aa).

NAD(+)-binding positions include glycine 7–glycine 13 and aspartate 34. 2 residues coordinate substrate: arginine 81 and arginine 87. NAD(+) contacts are provided by residues asparagine 94 and isoleucine 117 to asparagine 119. Substrate is bound by residues asparagine 119 and arginine 153. The Proton acceptor role is filled by histidine 177. Methionine 227 provides a ligand contact to NAD(+).

The protein belongs to the LDH/MDH superfamily. MDH type 1 family. In terms of assembly, homodimer.

It catalyses the reaction (S)-malate + NAD(+) = oxaloacetate + NADH + H(+). In terms of biological role, catalyzes the reversible oxidation of malate to oxaloacetate. The protein is Malate dehydrogenase of Haemophilus influenzae (strain PittEE).